The sequence spans 249 residues: Methylthioribulose-1-phosphate dehydratase (249 aa).

2 residues coordinate Zn(2+): His103 and His105.

Belongs to the aldolase class II family. MtnB subfamily. Requires Zn(2+) as cofactor.

The catalysed reaction is 5-(methylsulfanyl)-D-ribulose 1-phosphate = 5-methylsulfanyl-2,3-dioxopentyl phosphate + H2O. Its pathway is amino-acid biosynthesis; L-methionine biosynthesis via salvage pathway; L-methionine from S-methyl-5-thio-alpha-D-ribose 1-phosphate: step 2/6. Its function is as follows. Catalyzes the dehydration of methylthioribulose-1-phosphate (MTRu-1-P) into 2,3-diketo-5-methylthiopentyl-1-phosphate (DK-MTP-1-P). This chain is Methylthioribulose-1-phosphate dehydratase, found in Leptospira interrogans serogroup Icterohaemorrhagiae serovar Lai (strain 56601).